Here is a 226-residue protein sequence, read N- to C-terminus: Deoxyribose-phosphate aldolase (226 aa).

Aspartate 94 serves as the catalytic Proton donor/acceptor. Lysine 156 functions as the Schiff-base intermediate with acetaldehyde in the catalytic mechanism. The active-site Proton donor/acceptor is lysine 185.

This sequence belongs to the DeoC/FbaB aldolase family. DeoC type 1 subfamily.

It is found in the cytoplasm. It carries out the reaction 2-deoxy-D-ribose 5-phosphate = D-glyceraldehyde 3-phosphate + acetaldehyde. It functions in the pathway carbohydrate degradation; 2-deoxy-D-ribose 1-phosphate degradation; D-glyceraldehyde 3-phosphate and acetaldehyde from 2-deoxy-alpha-D-ribose 1-phosphate: step 2/2. Functionally, catalyzes a reversible aldol reaction between acetaldehyde and D-glyceraldehyde 3-phosphate to generate 2-deoxy-D-ribose 5-phosphate. This Burkholderia orbicola (strain MC0-3) protein is Deoxyribose-phosphate aldolase.